Consider the following 417-residue polypeptide: Equilibrative nucleotide transporter 7 (417 aa).

11 helical membrane passes run 19-39 (LVCCFLGVGSLVAWNAMLTIT), 54-74 (VLTIVYQLVANVFIITLATKE), 84-104 (IFGYSLYTAGTFCLIILDLAS), 110-130 (VVAYVLLCLIVALFGLADAFV), 143-163 (PDFIQAFMAGLGIAGALTSVL), 184-204 (LFIGIATLIELACVFLYTLVF), 264-284 (LGINLSLIYVVTLSIFPGFLY), 293-315 (GDWYAPVLVAMYNGWDAISRFIP), 326-346 (KWITVCVVARLLLVPAFYFTA), 353-373 (WMLFLTSFLGLSNGYLTVCIF), and 392-412 (MCVFLLGGIFAGVCLGWLWLI).

This sequence belongs to the SLC29A/ENT transporter (TC 2.A.57) family. Expressed in leaves and flowers.

The protein localises to the cell membrane. Its function is as follows. Nucleoside transporter that can mediate uptake of adenosine, uridine, guanosine or cytidine when expressed in a heterologous system (yeast). The sequence is that of Equilibrative nucleotide transporter 7 (ENT7) from Arabidopsis thaliana (Mouse-ear cress).